A 538-amino-acid polypeptide reads, in one-letter code: Bifunctional purine biosynthesis protein PurH (538 aa).

One can recognise an MGS-like domain in the interval 6 to 158; the sequence is KHIPAPDLHR…KNHAYVATVV (153 aa).

This sequence belongs to the PurH family.

The catalysed reaction is (6R)-10-formyltetrahydrofolate + 5-amino-1-(5-phospho-beta-D-ribosyl)imidazole-4-carboxamide = 5-formamido-1-(5-phospho-D-ribosyl)imidazole-4-carboxamide + (6S)-5,6,7,8-tetrahydrofolate. It catalyses the reaction IMP + H2O = 5-formamido-1-(5-phospho-D-ribosyl)imidazole-4-carboxamide. Its pathway is purine metabolism; IMP biosynthesis via de novo pathway; 5-formamido-1-(5-phospho-D-ribosyl)imidazole-4-carboxamide from 5-amino-1-(5-phospho-D-ribosyl)imidazole-4-carboxamide (10-formyl THF route): step 1/1. It functions in the pathway purine metabolism; IMP biosynthesis via de novo pathway; IMP from 5-formamido-1-(5-phospho-D-ribosyl)imidazole-4-carboxamide: step 1/1. The sequence is that of Bifunctional purine biosynthesis protein PurH from Brucella melitensis biotype 2 (strain ATCC 23457).